Here is a 338-residue protein sequence, read N- to C-terminus: Cilia- and flagella-associated protein 36 (338 aa).

The stretch at 142–179 (ISDLEQEEMKLVSEALRLSKEEYEREQLRRSAKELNCT) forms a coiled coil. Disordered regions lie at residues 175–220 (ELNC…ESPY) and 281–314 (KKQESKKMAHNSEVHEEKATCSKQEMTEEEKKSL). Residues 187-202 (KQSNGSERTPSNTELP) show a composition bias toward polar residues. Positions 255–330 (NLSQAEKEQL…AEKLKEEVIL (76 aa)) form a coiled coil.

Belongs to the CFAP36 family.

It localises to the nucleus. The protein localises to the cytoplasm. Its subcellular location is the cell projection. It is found in the cilium. The protein resides in the flagellum. The polypeptide is Cilia- and flagella-associated protein 36 (Xenopus laevis (African clawed frog)).